We begin with the raw amino-acid sequence, 359 residues long: UDP-N-acetylglucosamine--N-acetylmuramyl-(pentapeptide) pyrophosphoryl-undecaprenol N-acetylglucosamine transferase (359 aa).

UDP-N-acetyl-alpha-D-glucosamine is bound by residues 12–14 (TGG), asparagine 124, arginine 163, serine 191, isoleucine 245, 264–269 (ALTVAE), and glutamine 290.

The protein belongs to the glycosyltransferase 28 family. MurG subfamily.

Its subcellular location is the cell inner membrane. It carries out the reaction di-trans,octa-cis-undecaprenyl diphospho-N-acetyl-alpha-D-muramoyl-L-alanyl-D-glutamyl-meso-2,6-diaminopimeloyl-D-alanyl-D-alanine + UDP-N-acetyl-alpha-D-glucosamine = di-trans,octa-cis-undecaprenyl diphospho-[N-acetyl-alpha-D-glucosaminyl-(1-&gt;4)]-N-acetyl-alpha-D-muramoyl-L-alanyl-D-glutamyl-meso-2,6-diaminopimeloyl-D-alanyl-D-alanine + UDP + H(+). It functions in the pathway cell wall biogenesis; peptidoglycan biosynthesis. Functionally, cell wall formation. Catalyzes the transfer of a GlcNAc subunit on undecaprenyl-pyrophosphoryl-MurNAc-pentapeptide (lipid intermediate I) to form undecaprenyl-pyrophosphoryl-MurNAc-(pentapeptide)GlcNAc (lipid intermediate II). The sequence is that of UDP-N-acetylglucosamine--N-acetylmuramyl-(pentapeptide) pyrophosphoryl-undecaprenol N-acetylglucosamine transferase from Nitrosococcus oceani (strain ATCC 19707 / BCRC 17464 / JCM 30415 / NCIMB 11848 / C-107).